We begin with the raw amino-acid sequence, 89 residues long: Small ribosomal subunit protein uS14A (89 aa).

Belongs to the universal ribosomal protein uS14 family. Contacts proteins S3 and S10. Part of the 30S ribosomal subunit.

Functionally, binds 16S rRNA, required for the assembly of 30S particles and may also be responsible for determining the conformation of the 16S rRNA at the A site. Non-essential protein. A second form of uS14, it can integrate into the 30S subunit where it partially compensates for loss of the major uS14 protein (AC P12878) in restoring 70S formation, although it does not seem to be incorporated into the ribosome as well as the major uS14. This is Small ribosomal subunit protein uS14A from Bacillus subtilis (strain 168).